A 403-amino-acid polypeptide reads, in one-letter code: Ubiquitin-like modifier-activating enzyme 5 (403 aa).

ATP-binding residues include glycine 81, aspartate 102, lysine 125, asparagine 148, and asparagine 182. Zn(2+)-binding residues include cysteine 224 and cysteine 227. The active-site Glycyl thioester intermediate is the cysteine 248. Zn(2+) contacts are provided by cysteine 301 and cysteine 306. The short motif at 333 to 345 (VVHEDNEWGIELV) is the UFM1-interacting sequence (UIS) element. A linker region spans residues 346 to 376 (SEVSEEELKNSSGPVPTLPEGITVAYTVPKK). Phosphoserine occurs at positions 357 and 392. The UFC1-binding sequence (UFC) motif lies at 388-403 (DSGESLEDLMARMKNM).

It belongs to the ubiquitin-activating E1 family. UBA5 subfamily. As to quaternary structure, homodimer; homodimerization is required for UFM1 activation. Interacts (via UIS motif) with UFM1; binds UFM1 via a trans-binding mechanism in which UFM1 interacts with distinct sites in both subunits of the UBA5 homodimer. Interacts (via C-terminus) with UFC1. Interacts (via UIS motif) with GABARAPL2 and, with lower affinity, with GABARAP and GABARAPL1.

The protein resides in the cytoplasm. It localises to the nucleus. Its subcellular location is the endoplasmic reticulum membrane. The protein localises to the golgi apparatus. Its function is as follows. E1-like enzyme which specifically catalyzes the first step in ufmylation. Activates UFM1 by first adenylating its C-terminal glycine residue with ATP, and thereafter linking this residue to the side chain of a cysteine residue in E1, yielding a UFM1-E1 thioester and free AMP. Activates UFM1 via a trans-binding mechanism, in which UFM1 interacts with distinct sites in both subunits of the UBA5 homodimer. Trans-binding also promotes stabilization of the UBA5 homodimer, and enhances ATP-binding. Transfer of UFM1 from UBA5 to the E2-like enzyme UFC1 also takes place using a trans mechanism. Ufmylation plays a key role in various processes, such as ribosome recycling, response to DNA damage, interferon response or reticulophagy (also called ER-phagy). Ufmylation is essential for erythroid differentiation of both megakaryocytes and erythrocytes. The polypeptide is Ubiquitin-like modifier-activating enzyme 5 (Mus musculus (Mouse)).